Reading from the N-terminus, the 425-residue chain is Pre-mRNA-splicing factor RBM22 (425 aa).

The C3H1-type zinc finger occupies 159-186 (RNRPHICSFWVKGECKRGEECPYRHEKP). The 74-residue stretch at 232–305 (TTLYIGGLGE…RRLNVKWGRS (74 aa)) folds into the RRM domain. Disordered stretches follow at residues 304 to 331 (RSQA…PGLP) and 384 to 425 (HTMD…HGGP). Pro residues predominate over residues 389–399 (MAPPVPPPMAL).

Belongs to the SLT11 family. Component of the pre-catalytic and catalytic spliceosome complexes. Component of the postcatalytic spliceosome P complex.

It localises to the nucleus. Its subcellular location is the cytoplasm. Required for pre-mRNA splicing as component of the activated spliceosome. Involved in the first step of pre-mRNA splicing. Binds directly to the internal stem-loop (ISL) domain of the U6 snRNA and to the pre-mRNA intron near the 5' splice site during the activation and catalytic phases of the spliceosome cycle. Required for normal early embryogenesis. The chain is Pre-mRNA-splicing factor RBM22 (rbm22) from Danio rerio (Zebrafish).